Consider the following 118-residue polypeptide: Large ribosomal subunit protein uL18 (118 aa).

This sequence belongs to the universal ribosomal protein uL18 family. Part of the 50S ribosomal subunit; part of the 5S rRNA/L5/L18/L25 subcomplex. Contacts the 5S and 23S rRNAs.

Functionally, this is one of the proteins that bind and probably mediate the attachment of the 5S RNA into the large ribosomal subunit, where it forms part of the central protuberance. The sequence is that of Large ribosomal subunit protein uL18 from Limosilactobacillus reuteri (strain DSM 20016) (Lactobacillus reuteri).